The primary structure comprises 192 residues: Adenylate kinase (192 aa).

ATP is bound at residue 12-17 (GSGKTT). The tract at residues 34–63 (STGDLLRAEVASGSELGKTIDSFISKGNLV) is NMP. AMP is bound by residues Thr35, Arg40, 61–63 (NLV), 88–91 (GYPR), and Gln95. Residues 130–136 (GRNRGAD) form an LID region. Arg131 contributes to the ATP binding site. 2 residues coordinate AMP: Arg133 and Arg145. ATP is bound at residue Arg173.

It belongs to the adenylate kinase family. In terms of assembly, monomer.

Its subcellular location is the cytoplasm. The catalysed reaction is AMP + ATP = 2 ADP. It functions in the pathway purine metabolism; AMP biosynthesis via salvage pathway; AMP from ADP: step 1/1. In terms of biological role, catalyzes the reversible transfer of the terminal phosphate group between ATP and AMP. Plays an important role in cellular energy homeostasis and in adenine nucleotide metabolism. The protein is Adenylate kinase of Campylobacter jejuni subsp. jejuni serotype O:2 (strain ATCC 700819 / NCTC 11168).